Reading from the N-terminus, the 239-residue chain is Putative ankyrin repeat protein RBE_0489 (239 aa).

3 ANK repeats span residues 23–52 (ISSR…SPNA), 80–109 (GIDT…FINA), and 113–143 (FGFT…SLTL).

In Rickettsia bellii (strain RML369-C), this protein is Putative ankyrin repeat protein RBE_0489.